A 652-amino-acid polypeptide reads, in one-letter code: Translation factor guf1, mitochondrial (652 aa).

The N-terminal 44 residues, 1-44 (MSIFRLSRTFSLETCLKSSSFKIRWRFFSVSYASRKLASEDNKP), are a transit peptide targeting the mitochondrion. The tr-type G domain occupies 56–237 (NRVRNWAVIA…EIIQKIPPPK (182 aa)). GTP contacts are provided by residues 65 to 72 (AHIDHGKS), 130 to 134 (DTPGH), and 184 to 187 (NKVD).

Belongs to the TRAFAC class translation factor GTPase superfamily. Classic translation factor GTPase family. LepA subfamily.

The protein resides in the mitochondrion inner membrane. It carries out the reaction GTP + H2O = GDP + phosphate + H(+). Promotes mitochondrial protein synthesis. May act as a fidelity factor of the translation reaction, by catalyzing a one-codon backward translocation of tRNAs on improperly translocated ribosomes. Binds to mitochondrial ribosomes in a GTP-dependent manner. The chain is Translation factor guf1, mitochondrial (guf1) from Schizosaccharomyces pombe (strain 972 / ATCC 24843) (Fission yeast).